Here is a 492-residue protein sequence, read N- to C-terminus: Cytochrome P450 2B19 (492 aa).

Ser129 bears the Phosphoserine; by PKA mark. Position 437 (Cys437) interacts with heme.

This sequence belongs to the cytochrome P450 family. It depends on heme as a cofactor. Expressed only in differentiated keratinocytes in skin.

The protein resides in the endoplasmic reticulum membrane. The protein localises to the microsome membrane. The enzyme catalyses an organic molecule + reduced [NADPH--hemoprotein reductase] + O2 = an alcohol + oxidized [NADPH--hemoprotein reductase] + H2O + H(+). In terms of biological role, cytochromes P450 are a group of heme-thiolate monooxygenases. In liver microsomes, this enzyme is involved in an NADPH-dependent electron transport pathway. It oxidizes a variety of structurally unrelated compounds, including steroids, fatty acids, and xenobiotics. In Mus musculus (Mouse), this protein is Cytochrome P450 2B19 (Cyp2b19).